The following is a 144-amino-acid chain: 3-dehydroquinate dehydratase (144 aa).

The Proton acceptor role is filled by Tyr-24. 3 residues coordinate substrate: Asn-73, His-79, and Asp-86. His-99 acts as the Proton donor in catalysis. Substrate is bound by residues 100-101 and Arg-110; that span reads LS.

This sequence belongs to the type-II 3-dehydroquinase family. In terms of assembly, homododecamer.

The catalysed reaction is 3-dehydroquinate = 3-dehydroshikimate + H2O. The protein operates within metabolic intermediate biosynthesis; chorismate biosynthesis; chorismate from D-erythrose 4-phosphate and phosphoenolpyruvate: step 3/7. In terms of biological role, catalyzes a trans-dehydration via an enolate intermediate. The chain is 3-dehydroquinate dehydratase from Shewanella sp. (strain ANA-3).